A 79-amino-acid chain; its full sequence is ATP synthase subunit c (79 aa).

A run of 2 helical transmembrane segments spans residues 11–31 and 53–73; these read IAAAIMMGLSAIGAAVGIGIL and FFIVMGLVDAIPMITVGLSLY.

Belongs to the ATPase C chain family. In terms of assembly, F-type ATPases have 2 components, F(1) - the catalytic core - and F(0) - the membrane proton channel. F(1) has five subunits: alpha(3), beta(3), gamma(1), delta(1), epsilon(1). F(0) has three main subunits: a(1), b(2) and c(10-14). The alpha and beta chains form an alternating ring which encloses part of the gamma chain. F(1) is attached to F(0) by a central stalk formed by the gamma and epsilon chains, while a peripheral stalk is formed by the delta and b chains.

The protein localises to the cell inner membrane. F(1)F(0) ATP synthase produces ATP from ADP in the presence of a proton or sodium gradient. F-type ATPases consist of two structural domains, F(1) containing the extramembraneous catalytic core and F(0) containing the membrane proton channel, linked together by a central stalk and a peripheral stalk. During catalysis, ATP synthesis in the catalytic domain of F(1) is coupled via a rotary mechanism of the central stalk subunits to proton translocation. Functionally, key component of the F(0) channel; it plays a direct role in translocation across the membrane. A homomeric c-ring of between 10-14 subunits forms the central stalk rotor element with the F(1) delta and epsilon subunits. The polypeptide is ATP synthase subunit c (Blochmanniella floridana).